The chain runs to 492 residues: Stromelysin-3 (492 aa).

An N-terminal signal peptide occupies residues M1 to A35. Positions R36–R101 are cleaved as a propeptide — activation peptide. Residues L82–L89 carry the Cysteine switch motif. Positions 84, 168, and 170 each coordinate Zn(2+). 4 residues coordinate Ca(2+): D175, G176, G178, and I180. Residues H183, H196, and H219 each coordinate Zn(2+). E220 is an active-site residue. Residues H223 and H229 each coordinate Zn(2+). 4 Hemopexin repeats span residues P295 to L343, P344 to L386, G388 to V436, and P437 to C484. A disulfide bridge links C298 with C484.

The protein belongs to the peptidase M10A family. The cofactor is Ca(2+). Zn(2+) is required as a cofactor. Post-translationally, the precursor is cleaved by a furin endopeptidase. In terms of tissue distribution, specifically expressed in the mammary gland during apoptosis.

The protein resides in the secreted. Its subcellular location is the extracellular space. The protein localises to the extracellular matrix. Functionally, may play an important role in the progression of epithelial malignancies. This is Stromelysin-3 (Mmp11) from Mus musculus (Mouse).